Consider the following 828-residue polypeptide: Outer membrane usher protein PmfC (828 aa).

The first 28 residues, 1–28 (MLIPYSPHTIWKTICATLLLSLAFFSQA), serve as a signal peptide directing secretion.

Belongs to the fimbrial export usher family.

It localises to the cell outer membrane. Involved in the export and assembly of PMF fimbrial subunits across the outer membrane. The protein is Outer membrane usher protein PmfC (pmfC) of Proteus mirabilis (strain HI4320).